We begin with the raw amino-acid sequence, 403 residues long: JmjC domain-containing histone demethylation protein 1 (403 aa).

A JmjC domain is found at 141–328 (WSLREWCNYF…QQLKIVDVEK (188 aa)). Thr221 provides a ligand contact to substrate. Fe cation is bound by residues His224 and Asp226. Lys241 is a substrate binding site. His296 contacts Fe cation.

This sequence belongs to the JHDM1 histone demethylase family. Fe(2+) serves as cofactor.

It localises to the nucleus. The enzyme catalyses N(6),N(6)-dimethyl-L-lysyl(36)-[histone H3] + 2 2-oxoglutarate + 2 O2 = L-lysyl(36)-[histone H3] + 2 formaldehyde + 2 succinate + 2 CO2. Its function is as follows. Histone demethylase that specifically demethylates 'Lys-36' of histone H3, thereby playing a central role in histone code. The sequence is that of JmjC domain-containing histone demethylation protein 1 (JHD1) from Candida glabrata (strain ATCC 2001 / BCRC 20586 / JCM 3761 / NBRC 0622 / NRRL Y-65 / CBS 138) (Yeast).